A 263-amino-acid polypeptide reads, in one-letter code: Probable cyclic nucleotide phosphodiesterase CPS_4178 (263 aa).

Fe cation-binding residues include Asp-21, His-23, Asp-62, Asn-94, His-160, His-198, and His-200. AMP-binding positions include His-23, Asp-62, and 94-95; that span reads NH. Residue His-200 participates in AMP binding.

The protein belongs to the cyclic nucleotide phosphodiesterase class-III family. Requires Fe(2+) as cofactor.

This chain is Probable cyclic nucleotide phosphodiesterase CPS_4178, found in Colwellia psychrerythraea (strain 34H / ATCC BAA-681) (Vibrio psychroerythus).